A 1291-amino-acid polypeptide reads, in one-letter code: MAGAASPCANGCGPSAPSDAEVVHLCRSLEVGTVMTLFYSKKSQRPERKTFQVKLETRQITWSRGADKIEGAIDIREIKEIRPGKTSRDFDRYQEDPAFRPDQSHCFVILYGMEFRLKTLSLQATSEDEVNMWIRGLTWLMEDTLQAATPLQIERWLRKQFYSVDRNREDRISAKDLKNMLSQVNYRVPNMRFLRERLTDLEQRTSDITYGQFAQLYRSLMYSAQKTMDLPFLEASALRAGERPELCRVSLPEFQQFLLEYQGELWAVDRLQVQEFMLSFLRDPLREIEEPYFFLDEFVTFLFSKENSIWNSQLDEVCPDTMNNPLSHYWISSSHNTYLTGDQFSSESSLEAYARCLRMGCRCIELDCWDGPDGMPVIYHGHTLTTKIKFSDVLHTIKEHAFVASEYPVILSIEDHCSIAQQRNMAQYFKKVLGDTLLTKPVDIAADGLPSPNQLKRKILIKHKKLAEGSAYEEVPTSVMYSENDISNSIKNGILYLEDPVNHEWYPHYFVLTSSKIYYSEETSSDQGNEDEEEPKEASGSTELHSNEKWFHGKLGAGRDGRHIAERLLTEYCIETGAPDGSFLVRESETFVGDYTLSFWRNGKVQHCRIHSRQDAGTPKFFLTDNLVFDSLYDLITHYQQVPLRCNEFEMRLSEPVPQTNAHESKEWYHASLTRAQAEHMLMRVPRDGAFLVRKRNEPNSYAISFRAEGKIKHCRVQQEGQTVMLGNSEFDSLVDLISYYEKHPLYRKMKLRYPINEEALEKIGTAEPDYGALYEGRNPGFYVEANPMPTFKCAVKALFDYKAQREDELTFTKSAIIQNVEKQEGGWWRGDYGGKKQLWFPSNYVEEMVSPAALEPEREHLDENSPLGDLLRGVLDVPACQIAVRPEGKNNRLFVFSISMASVAHWSLDVAADSQEELQDWVKKIREVAQTADARLTEGKMMERRKKIALELSELVVYCRPVPFDEEKIGTERACYRDMSSFPETKAEKYVNKAKGKKFLQYNRLQLSRIYPKGQRLDSSNYDPLPMWICGSQLVALNFQTPDKPMQMNQALFLAGGHCGYVLQPSVMRDEAFDPFDKSSLRGLEPCAICIEVLGARHLPKNGRGIVCPFVEIEVAGAEYDSIKQKTEFVVDNGLNPVWPAKPFHFQISNPEFAFLRFVVYEEDMFSDQNFLAQATFPVKGLKTGYRAVPLKNNYSEGLELASLLVKIDVFPAKQENGDLSPFGGASLRERSCDASGPLFHGRAREGSFEARYQQPFEDFRISQEHLADHFDGRDRRTPRRTRVNGDNRL.

Alanine 2 is modified (N-acetylalanine). The region spanning 27–142 (RSLEVGTVMT…WIRGLTWLME (116 aa)) is the PH 1 domain. The EF-hand domain occupies 152-187 (QIERWLRKQFYSVDRNREDRISAKDLKNMLSQVNYR). Aspartate 165, asparagine 167, glutamate 169, arginine 171, and aspartate 176 together coordinate Ca(2+). A PI-PLC X-box domain is found at 320–464 (DTMNNPLSHY…LKRKILIKHK (145 aa)). Active-site residues include histidine 335 and histidine 380. In terms of domain architecture, PH 2; first part spans 489–523 (SIKNGILYLEDPVNHEWYPHYFVLTSSKIYYSEET). Tyrosine 506 is modified (phosphotyrosine). The interval 522 to 544 (ETSSDQGNEDEEEPKEASGSTEL) is disordered. 2 SH2 domains span residues 550-657 (WFHG…SEPV) and 668-756 (WYHA…RYPI). Tyrosine 771 bears the Phosphotyrosine; by SYK mark. 2 positions are modified to phosphotyrosine: tyrosine 775 and tyrosine 783. Phosphotyrosine; by ITK, SYK and TXK is present on tyrosine 783. In terms of domain architecture, SH3 spans 791 to 851 (TFKCAVKALF…PSNYVEEMVS (61 aa)). A PH 2; second part domain is found at 895–931 (FVFSISMASVAHWSLDVAADSQEELQDWVKKIREVAQ). One can recognise a PI-PLC Y-box domain in the interval 953–1070 (LSELVVYCRP…GYVLQPSVMR (118 aa)). At tyrosine 977 the chain carries Phosphotyrosine. Positions 1071–1194 (DEAFDPFDKS…TGYRAVPLKN (124 aa)) constitute a C2 domain. 3 positions are modified to phosphoserine: serine 1222, serine 1228, and serine 1249. A Phosphotyrosine modification is found at tyrosine 1254. Serine 1264 is modified (phosphoserine). The tract at residues 1271–1291 (HFDGRDRRTPRRTRVNGDNRL) is disordered.

As to quaternary structure, interacts with AGAP2 via its SH3 domain. Interacts (via SH2 domain) with RET. Interacts with FLT1 (tyrosine-phosphorylated). Interacts (via SH2 domain) with FGFR1, FGFR2, FGFR3 and FGFR4 (phosphorylated). Interacts with LAT (phosphorylated) upon TCR activation. Interacts (via SH3 domain) with the Pro-rich domain of TNK1. Associates with BLNK, VAV1, GRB2 and NCK1 in a B-cell antigen receptor-dependent fashion. Interacts with CBLB in activated T-cells; which inhibits phosphorylation. Interacts with SHB. Interacts (via SH3 domain) with the Arg/Gly-rich-flanked Pro-rich domains of KHDRBS1/SAM68. This interaction is selectively regulated by arginine methylation of KHDRBS1/SAM68. Interacts with INPP5D/SHIP1, THEMIS and CLNK. Interacts with AXL, FLT4 and KIT. Interacts with RALGPS1. Interacts (via the SH2 domains) with VIL1 (phosphorylated at C-terminus tyrosine phosphorylation sites). Interacts (via SH2 domain) with PDGFRA and PDGFRB (tyrosine phosphorylated). Interacts with PIP5K1C. Interacts with NTRK1 and NTRK2 (phosphorylated upon ligand-binding). Interacts with SYK; activates PLCG1. Interacts with GRB2, LAT and THEMIS upon TCR activation in thymocytes. Interacts with TESPA1; the association is increased with prolonged stimulation of the TCR and may facilitate the assembly of the LAT signalosome. Interacts (via C-terminal proline-rich domain (PRD)) with PLCG1 (via SH3 domain); this interaction leads to guanine nucleotide exchange from PlCG1 to DNM1 and enhances DNM1-dependent endocytosis. It depends on Ca(2+) as a cofactor. Ubiquitinated by CBLB in activated T-cells. In terms of processing, tyrosine phosphorylated in response to signaling via activated FLT3, KIT and PDGFRA. Tyrosine phosphorylated by activated FGFR1, FGFR2, FGFR3 and FGFR4. Tyrosine phosphorylated by activated FLT1 and KDR. Tyrosine phosphorylated by activated PDGFRB. The receptor-mediated activation of PLCG1 involves its phosphorylation by tyrosine kinases, in response to ligation of a variety of growth factor receptors and immune system receptors. For instance, SYK phosphorylates and activates PLCG1 in response to ligation of the B-cell receptor. May be dephosphorylated by PTPRJ. Phosphorylated by ITK and TXK on Tyr-783 upon TCR activation in T-cells.

It is found in the cell projection. The protein resides in the lamellipodium. Its subcellular location is the ruffle. It catalyses the reaction a 1,2-diacyl-sn-glycero-3-phospho-(1D-myo-inositol-4,5-bisphosphate) + H2O = 1D-myo-inositol 1,4,5-trisphosphate + a 1,2-diacyl-sn-glycerol + H(+). It carries out the reaction a 1,2-diacyl-sn-glycero-3-phospho-(1D-myo-inositol) + H2O = 1D-myo-inositol 1-phosphate + a 1,2-diacyl-sn-glycerol + H(+). Its activity is regulated as follows. Activated by phosphorylation on tyrosine residues. In terms of biological role, mediates the production of the second messenger molecules diacylglycerol (DAG) and inositol 1,4,5-trisphosphate (IP3). Plays an important role in the regulation of intracellular signaling cascades. Becomes activated in response to ligand-mediated activation of receptor-type tyrosine kinases, such as PDGFRA, PDGFRB, EGFR, FGFR1, FGFR2, FGFR3 and FGFR4. Plays a role in actin reorganization and cell migration. Guanine nucleotide exchange factor that binds the GTPase DNM1 and catalyzes the dissociation of GDP, allowing a GTP molecule to bind in its place, therefore enhancing DNM1-dependent endocytosis. This is 1-phosphatidylinositol 4,5-bisphosphate phosphodiesterase gamma-1 from Bos taurus (Bovine).